The primary structure comprises 66 residues: Large ribosomal subunit protein bL33c (66 aa).

This sequence belongs to the bacterial ribosomal protein bL33 family.

It is found in the plastid. It localises to the chloroplast. This Glycine max (Soybean) protein is Large ribosomal subunit protein bL33c.